The chain runs to 398 residues: Elongation factor Tu (398 aa).

A tr-type G domain is found at 10 to 207 (KPHVNIGTIG…TVDEYIPEPE (198 aa)). The interval 19–26 (GHVDHGKT) is G1. 19 to 26 (GHVDHGKT) provides a ligand contact to GTP. Position 26 (Thr-26) interacts with Mg(2+). The interval 63–67 (GITIN) is G2. The segment at 84-87 (DAPG) is G3. GTP contacts are provided by residues 84–88 (DAPGH) and 139–142 (NKVD). Residues 139 to 142 (NKVD) are G4. The interval 177 to 179 (SAL) is G5.

The protein belongs to the TRAFAC class translation factor GTPase superfamily. Classic translation factor GTPase family. EF-Tu/EF-1A subfamily. In terms of assembly, monomer.

The protein localises to the cytoplasm. The enzyme catalyses GTP + H2O = GDP + phosphate + H(+). In terms of biological role, GTP hydrolase that promotes the GTP-dependent binding of aminoacyl-tRNA to the A-site of ribosomes during protein biosynthesis. This Streptococcus pyogenes serotype M49 (strain NZ131) protein is Elongation factor Tu.